The sequence spans 84 residues: Small ribosomal subunit protein bS20 (84 aa).

This sequence belongs to the bacterial ribosomal protein bS20 family.

Its function is as follows. Binds directly to 16S ribosomal RNA. This chain is Small ribosomal subunit protein bS20, found in Limosilactobacillus fermentum (strain NBRC 3956 / LMG 18251) (Lactobacillus fermentum).